The primary structure comprises 88 residues: Large ribosomal subunit protein bL27 (88 aa).

Residues 1–24 are disordered; that stretch reads MAHKKGTGSTRNGRDSNSKRLGVK.

It belongs to the bacterial ribosomal protein bL27 family.

This Synechococcus sp. (strain CC9311) protein is Large ribosomal subunit protein bL27.